Reading from the N-terminus, the 580-residue chain is Phosphatase and actin regulator 1 (580 aa).

A phosphoserine mark is found at S67 and S78. Residue T104 is modified to Phosphothreonine. A Nuclear localization signal motif is present at residues 108–129 (RRRSKFANLGRIFKPWKWRKKK). One copy of the RPEL 1 repeat lies at 138-163 (AALERKISMRQSREELIKRGVLKEIY). Disordered stretches follow at residues 331-355 (EQRVPCSTSYHSSGLHSGDGVTKAG) and 376-410 (KENVPHESDYEDSSCLYTREEEEEEEDEDDDSSLY). Over residues 335–345 (PCSTSYHSSGL) the composition is skewed to polar residues. A compositionally biased stretch (acidic residues) spans 395–407 (EEEEEEEDEDDDS). RPEL repeat units follow at residues 422 to 447 (DSLAIKLSNRPSKRELEEKNILPRQT), 460 to 484 (TKLTRRLSQRPTAEELEQRNILKPR), and 498 to 523 (RRLTRKLSQRPTVEELRERKILIRFS). The tract at residues 462 to 494 (LTRRLSQRPTAEELEQRNILKPRNEQEEQEEKR) is disordered. S467 carries the post-translational modification Phosphoserine. The span at 471–494 (TAEELEQRNILKPRNEQEEQEEKR) shows a compositional bias: basic and acidic residues. A Phosphoserine modification is found at S505.

This sequence belongs to the phosphatase and actin regulator family. Interacts (via RPEL repeats) with ACTA1 and PPP1CA; ACTA1 and PPP1CA compete for the same binding site. In terms of tissue distribution, detected in umbilical vein endothelial cells.

Its subcellular location is the cytoplasm. It localises to the synapse. It is found in the nucleus. Functionally, binds actin monomers (G actin) and plays a role in multiple processes including the regulation of actin cytoskeleton dynamics, actin stress fibers formation, cell motility and survival, formation of tubules by endothelial cells, and regulation of PPP1CA activity. Involved in the regulation of cortical neuron migration and dendrite arborization. The protein is Phosphatase and actin regulator 1 (PHACTR1) of Homo sapiens (Human).